Reading from the N-terminus, the 931-residue chain is Protocadherin gamma-A1 (931 aa).

The first 28 residues, methionine 1 to alanine 28, serve as a signal peptide directing secretion. 6 consecutive Cadherin domains span residues glycine 29–phenylalanine 133, glutamine 134–phenylalanine 242, threonine 243–valine 347, threonine 348–phenylalanine 452, histidine 453–isoleucine 562, and aspartate 570–alanine 682. Over glycine 29–tyrosine 692 the chain is Extracellular. N-linked (GlcNAc...) asparagine glycosylation is found at asparagine 265, asparagine 419, and asparagine 545. Asparagine 685 is a glycosylation site (N-linked (GlcNAc...) asparagine). The chain crosses the membrane as a helical span at residues leucine 693–alanine 713. Topologically, residues histidine 714–lysine 931 are cytoplasmic. Disordered stretches follow at residues lysine 801–asparagine 840 and alanine 901–lysine 931. Residues phenylalanine 805–asparagine 840 are compositionally biased toward polar residues. Over residues asparagine 921–lysine 931 the composition is skewed to basic residues.

It localises to the cell membrane. In terms of biological role, potential calcium-dependent cell-adhesion protein. May be involved in the establishment and maintenance of specific neuronal connections in the brain. In Homo sapiens (Human), this protein is Protocadherin gamma-A1 (PCDHGA1).